We begin with the raw amino-acid sequence, 387 residues long: Histone deacetylase 2 (387 aa).

Residues 73–382 (KVSIIYSSSY…IENLSRQGLI (310 aa)) are histone deacetylase. His-201 serves as the catalytic Proton donor/acceptor. Zn(2+) contacts are provided by Asp-238, His-240, and Asp-318.

Belongs to the histone deacetylase family. HD type 3 subfamily. Zn(2+) serves as cofactor.

It is found in the nucleus. The catalysed reaction is N(6)-acetyl-L-lysyl-[histone] + H2O = L-lysyl-[histone] + acetate. Responsible for the deacetylation of lysine residues on the N-terminal part of the core histones (H2A, H2B, H3 and H4). Histone deacetylation gives a tag for epigenetic repression and plays an important role in transcriptional regulation, cell cycle progression and developmental events. Histone deacetylases act via the formation of large multiprotein complexes. This Arabidopsis thaliana (Mouse-ear cress) protein is Histone deacetylase 2 (HDA2).